A 319-amino-acid chain; its full sequence is L-lactate dehydrogenase (319 aa).

Residues Val-17, Asp-38, Lys-43, Tyr-69, and 83 to 84 (GA) each bind NAD(+). Gln-86 and Arg-92 together coordinate substrate. NAD(+) is bound by residues Thr-105, 122 to 124 (ATN), and Ser-147. 124–127 (NPVD) contacts substrate. 152-155 (DTAR) is a substrate binding site. Arg-157 and His-172 together coordinate beta-D-fructose 1,6-bisphosphate. The Proton acceptor role is filled by His-179. Tyr-224 bears the Phosphotyrosine mark. Position 233 (Thr-233) interacts with substrate.

It belongs to the LDH/MDH superfamily. LDH family. In terms of assembly, homotetramer.

It localises to the cytoplasm. It catalyses the reaction (S)-lactate + NAD(+) = pyruvate + NADH + H(+). Its pathway is fermentation; pyruvate fermentation to lactate; (S)-lactate from pyruvate: step 1/1. Allosterically activated by fructose 1,6-bisphosphate (FBP). Functionally, catalyzes the conversion of lactate to pyruvate. This is L-lactate dehydrogenase from Geobacillus sp. (strain WCH70).